Reading from the N-terminus, the 571-residue chain is Proline--tRNA ligase (571 aa).

The protein belongs to the class-II aminoacyl-tRNA synthetase family. ProS type 1 subfamily. In terms of assembly, homodimer.

It is found in the cytoplasm. It carries out the reaction tRNA(Pro) + L-proline + ATP = L-prolyl-tRNA(Pro) + AMP + diphosphate. Functionally, catalyzes the attachment of proline to tRNA(Pro) in a two-step reaction: proline is first activated by ATP to form Pro-AMP and then transferred to the acceptor end of tRNA(Pro). As ProRS can inadvertently accommodate and process non-cognate amino acids such as alanine and cysteine, to avoid such errors it has two additional distinct editing activities against alanine. One activity is designated as 'pretransfer' editing and involves the tRNA(Pro)-independent hydrolysis of activated Ala-AMP. The other activity is designated 'posttransfer' editing and involves deacylation of mischarged Ala-tRNA(Pro). The misacylated Cys-tRNA(Pro) is not edited by ProRS. This chain is Proline--tRNA ligase, found in Pasteurella multocida (strain Pm70).